Reading from the N-terminus, the 430-residue chain is MLPRELGEILDVVTRHNAWRRKETINLIASENVMSPLAELYYINDLAGRYAEGTVGNRYYQGTRYVDVLEDALVKKFSAVLEAKFVDVRPISGTVANLATYFALTPEGGTVASLPVKYGGHISHNTVGGVKALRLKTVELPWDLENFNVDVDAARKLIEEKRPNLIILGASLYLFPHPVKEVAEAAKTVGAYVLHDSAHVFGLIVGGVFPNPLKEGAHVTTASTHKTFPGPQGGVIATALDDERNSQIQRAVFPTFTSNYHLHRYAATYVTLVEMEVFGREYASRIVENARALAEALASEGVPPVAEKLGYTRTHQVAVDVSKFGGGDKAAALLEEANVIVNKNALPWDKSVLKPSGIRMGVQEMTRFGMGKDEMREIARFIARVLRGEDPAAVRRDVVEFRKSYLEIKYGFKIDRGEVEKVFNSLNLNT.

120–122 (GHI) lines the (6S)-5,6,7,8-tetrahydrofolate pocket. K226 bears the N6-(pyridoxal phosphate)lysine mark.

The protein belongs to the SHMT family. In terms of assembly, homodimer. Pyridoxal 5'-phosphate is required as a cofactor.

It localises to the cytoplasm. The protein operates within amino-acid biosynthesis; glycine biosynthesis; glycine from L-serine: step 1/1. Catalyzes the reversible interconversion of serine and glycine with a modified folate serving as the one-carbon carrier. Also exhibits a pteridine-independent aldolase activity toward beta-hydroxyamino acids, producing glycine and aldehydes, via a retro-aldol mechanism. This chain is Serine hydroxymethyltransferase, found in Pyrobaculum neutrophilum (strain DSM 2338 / JCM 9278 / NBRC 100436 / V24Sta) (Thermoproteus neutrophilus).